The sequence spans 247 residues: Isoprenyl transferase (247 aa).

The active site involves Asp-18. Asp-18 lines the Mg(2+) pocket. Substrate-binding positions include 19–22 (GNGR), Trp-23, Arg-31, His-35, and 63–65 (SSE). Asn-66 (proton acceptor) is an active-site residue. Residues Trp-67, Arg-69, Arg-186, and 192-194 (RLS) contribute to the substrate site. Glu-205 contacts Mg(2+).

Belongs to the UPP synthase family. As to quaternary structure, homodimer. It depends on Mg(2+) as a cofactor.

Its function is as follows. Catalyzes the condensation of isopentenyl diphosphate (IPP) with allylic pyrophosphates generating different type of terpenoids. The sequence is that of Isoprenyl transferase from Rhizobium meliloti (strain 1021) (Ensifer meliloti).